A 307-amino-acid chain; its full sequence is Malate dehydrogenase (307 aa).

NAD(+) contacts are provided by residues 8 to 13 and aspartate 33; that span reads GAGRVG. Arginine 82 and arginine 88 together coordinate substrate. Residues asparagine 95 and 118–120 each bind NAD(+); that span reads VSN. Residues asparagine 120 and arginine 151 each coordinate substrate. Catalysis depends on histidine 175, which acts as the Proton acceptor.

Belongs to the LDH/MDH superfamily. MDH type 3 family.

The enzyme catalyses (S)-malate + NAD(+) = oxaloacetate + NADH + H(+). In terms of biological role, catalyzes the reversible oxidation of malate to oxaloacetate. The sequence is that of Malate dehydrogenase from Thioalkalivibrio sulfidiphilus (strain HL-EbGR7).